Here is a 290-residue protein sequence, read N- to C-terminus: Acetylglutamate kinase (290 aa).

Substrate contacts are provided by residues 64-65 (GG), R86, and N183.

This sequence belongs to the acetylglutamate kinase family. ArgB subfamily.

The protein resides in the cytoplasm. It carries out the reaction N-acetyl-L-glutamate + ATP = N-acetyl-L-glutamyl 5-phosphate + ADP. The protein operates within amino-acid biosynthesis; L-arginine biosynthesis; N(2)-acetyl-L-ornithine from L-glutamate: step 2/4. Catalyzes the ATP-dependent phosphorylation of N-acetyl-L-glutamate. The protein is Acetylglutamate kinase of Halothermothrix orenii (strain H 168 / OCM 544 / DSM 9562).